Here is a 279-residue protein sequence, read N- to C-terminus: MGIRKYKPTTPGRRGSSVADFTEITRSTPEKSLVRPLPKKGGRNNTGKITTRHKGGGHKRQYRLIDFRRHDKDGVDARVAEIEYDPNRTARIALLHYVDGTKRYIIAPNKLSQGDFVEAGPNADIKPGNNLPLRNIPVGTVVHAVELRPGGGAKMGRSAGASIQLVAREGRFAQLRLPSGEIRNVDVRCRATVGEVGNAEQSNINWGKAGRMRWKGVRPTVRGVAMNPVDHPHGGGEGKTSGGRNPVNPNGQREGRTRRPNKESDKLIVRRRRTGKNKR.

2 disordered regions span residues 1–59 (MGIR…GGHK) and 224–279 (VAMN…KNKR). Basic residues predominate over residues 50–59 (TTRHKGGGHK). The span at 253–268 (REGRTRRPNKESDKLI) shows a compositional bias: basic and acidic residues. The span at 269–279 (VRRRRTGKNKR) shows a compositional bias: basic residues.

Belongs to the universal ribosomal protein uL2 family. Part of the 50S ribosomal subunit. Forms a bridge to the 30S subunit in the 70S ribosome.

In terms of biological role, one of the primary rRNA binding proteins. Required for association of the 30S and 50S subunits to form the 70S ribosome, for tRNA binding and peptide bond formation. It has been suggested to have peptidyltransferase activity; this is somewhat controversial. Makes several contacts with the 16S rRNA in the 70S ribosome. This Pseudarthrobacter chlorophenolicus (strain ATCC 700700 / DSM 12829 / CIP 107037 / JCM 12360 / KCTC 9906 / NCIMB 13794 / A6) (Arthrobacter chlorophenolicus) protein is Large ribosomal subunit protein uL2.